The chain runs to 554 residues: Intraflagellar transport protein 56 (554 aa).

The tract at residues 1-23 is disordered; that stretch reads MMLSRAKPAVGNEVQQIDKKKKK. 4 TPR repeats span residues 57–90, 92–125, 151–184, and 468–501; these read EDTE…EGCN, DVWV…LQNR, IEDQ…NRDF, and ANDC…EGKR.

This sequence belongs to the IFT56 family. In terms of assembly, component of the IFT complex B.

The protein resides in the cell projection. It is found in the cilium. Component of the intraflagellar transport (IFT) complex B required for transport of proteins in the motile cilium. Required for transport of specific ciliary cargo proteins related to motility, while it is neither required for IFT complex B assembly or motion nor for cilium assembly. Plays a key role in maintaining the integrity of the IFT complex B and the proper ciliary localization of the IFT complex B components. Essential for maintaining proper microtubule organization within the ciliary axoneme. The chain is Intraflagellar transport protein 56 from Xenopus tropicalis (Western clawed frog).